A 140-amino-acid polypeptide reads, in one-letter code: MSVYPECTWLLFVCLCHLLVSAGGSLLLPCEPINETISVEKDGCPKCLVFQTSICSGHCITKDPSYKSPLSTVYQRVCTYRDVRYETVRLPDCRPGVDPHVTFPVALSCDCNLCTMDTSDCAIQSLRPDFCMSQRASLPA.

The first 24 residues, 1–24 (MSVYPECTWLLFVCLCHLLVSAGG), serve as a signal peptide directing secretion. Intrachain disulfides connect Cys30-Cys78, Cys44-Cys93, Cys47-Cys131, Cys55-Cys109, Cys59-Cys111, and Cys114-Cys121. An N-linked (GlcNAc...) asparagine glycan is attached at Asn34.

Belongs to the glycoprotein hormones subunit beta family. As to quaternary structure, heterodimer of an alpha and a beta chain.

It localises to the secreted. Functionally, involved in gametogenesis and steroidogenesis. The sequence is that of Gonadotropin subunit beta-2 (cgbb) from Anguilla anguilla (European freshwater eel).